The chain runs to 50 residues: Putative protein HokF (50 aa).

The chain crosses the membrane as a helical span at residues 5 to 25 (YALVAVIVLCLTVPGFTLLVG).

Belongs to the Hok/Gef family.

It localises to the cell inner membrane. Functionally, toxic component of a type I toxin-antitoxin (TA) system. When overexpressed kills cells within minutes; causes collapse of the transmembrane potential and arrest of respiration. Its toxic effect is probably neutralized by an antisense antitoxin Sok RNA. The polypeptide is Putative protein HokF (hokF) (Escherichia coli O157:H7).